We begin with the raw amino-acid sequence, 468 residues long: Histone acetyltransferase type B catalytic subunit (468 aa).

S8 is subject to Phosphoserine. 2 interaction with histone H4 N-terminus regions span residues 44–46 (EEE) and 208–210 (YKF). Residues 248 to 250 (FLI) and 255 to 261 (QKSGNGS) contribute to the acetyl-CoA site. E283 serves as the catalytic Proton donor/acceptor. A disordered region spans residues 442–468 (SSNLKRKLDDDENTEGSSSKKARVEDA).

It belongs to the HAT1 family. In terms of assembly, component of the HAT-B complex composed of at least HAT1 and HAT2. The HAT-B complex binds to histone H4 tail. In the nucleus, interacts with GSK1 and SSB1. In the cytoplasm, interacts with ATG3 and ATG9. Post-translationally, phosphorylated at Ser-8 by GSK1 in the nucleus which impairs its translocation to the cytoplasm through interfering the interaction between HAT1 and SSB1. Dephosphorylation under nutrient starvation conditions promotes the interaction between HAT1 and SSB1 and results in the translocation of HAT1 from the nucleus to the cytoplasm in order to acetylate ATG3 and ATG9.

It localises to the nucleus. Its subcellular location is the cytoplasm. The protein localises to the preautophagosomal structure. The catalysed reaction is L-lysyl-[protein] + acetyl-CoA = N(6)-acetyl-L-lysyl-[protein] + CoA + H(+). In terms of biological role, catalytic component of the histone acetylase B (HAT-B) complex. Has intrinsic substrate specificity that modifies lysine in recognition sequence GXGKXG. Involved in DNA double-strand break repair. Required for appressorium turgor pressure, autophagy and conidial nuclear degradation. During the germination process and upon starvation conditions, translocates from the nucleus to the cytoplasm where it acetylates ATG3 at 'lys-262' and 'Lys-267', thus influencing autophagy through controlling ATG3-ATG8 interaction. Also acetylates ATG9 at 'Lys-621' to regulate ATG9 binding to vesicles, which is also important for autophagy and pathogenicity. In Pyricularia oryzae (strain 70-15 / ATCC MYA-4617 / FGSC 8958) (Rice blast fungus), this protein is Histone acetyltransferase type B catalytic subunit.